The sequence spans 450 residues: Isoleucine 2-epimerase (450 aa).

Pyridoxal 5'-phosphate-binding positions include 115–116 (GS), Tyr142, and 250–253 (DEVN). Position 280 is an N6-(pyridoxal phosphate)lysine (Lys280). Thr309 is a binding site for pyridoxal 5'-phosphate.

It belongs to the class-III pyridoxal-phosphate-dependent aminotransferase family. Homotetramer. Pyridoxal 5'-phosphate is required as a cofactor.

The enzyme catalyses L-isoleucine = D-allo-isoleucine. In terms of biological role, catalyzes the epimerization of L-isoleucine to D-allo-isoleucine and D-allo-isoleucine to L-isoleucine. Can also catalyze the racemization of many nonpolar amino acids, including leucine and valine. Does not have GABA aminotransferase activity. The protein is Isoleucine 2-epimerase of Lentilactobacillus buchneri (Lactobacillus buchneri).